The sequence spans 1108 residues: Retinal guanylyl cyclase 1 (1108 aa).

The signal sequence occupies residues 1–54 (MSAWLLPAGGFPGAGFCIPAWQSRSSLSRVLRWPGPGLPGLLLLLLLPSPSAFS). Residues 55 to 465 (AVFKVGVLGP…PDVICNGGVE (411 aa)) are Extracellular-facing. The cysteines at positions 108 and 136 are disulfide-linked. Asn-300 carries N-linked (GlcNAc...) asparagine glycosylation. A helical membrane pass occupies residues 466-490 (PGLVFVGFLLVIVVGLTGAFLAHYL). At 491-1108 (RHRLLHMQMV…KARPGQFTGK (618 aa)) the chain is on the cytoplasmic side. Positions 520 to 552 (GGSSRKVAQGSRSSLATRSTSDIRSVPSQPQES) are disordered. Residues 520 to 811 (GGSSRKVAQG…DLTFDLFKGI (292 aa)) form the Protein kinase domain. Positions 529–552 (GSRSSLATRSTSDIRSVPSQPQES) are enriched in polar residues. A Guanylate cyclase domain is found at 883-1013 (TLYFSDIVGF…DTVNTASRME (131 aa)). Residues 1069 to 1108 (IPKPPDLQPGASNHGISLQEIPPERRKKLEKARPGQFTGK) are disordered.

Belongs to the adenylyl cyclase class-4/guanylyl cyclase family. As to quaternary structure, homodimer; requires homodimerization for guanylyl cyclase activity. Interacts (via C-terminus) with RD3 (via C-terminus); promotes the exit of GUCY2E from the endoplasmic reticulum and its trafficking to the photoreceptor outer segments. Interaction with RD3 negatively regulates GUCY2E guanylate cyclase activity. There are 9 conserved cysteine residues in sensory guanylate cyclases, 6 in the extracellular domain, which may be involved in intra- or interchain disulfide bonds. As to expression, expressed in retina and enriched in photoreceptor outer segments.

It is found in the membrane. It localises to the photoreceptor outer segment membrane. Its subcellular location is the endoplasmic reticulum membrane. It catalyses the reaction GTP = 3',5'-cyclic GMP + diphosphate. Its activity is regulated as follows. Activated by GUCA1A when free calcium ions concentration is low, and inhibited by GUCA1A when free calcium ions concentration is high. Negatively regulated by RD3; inhibits the basal and GUCA1A-stimulated guanylate cyclase activity. In terms of biological role, catalyzes the synthesis of cyclic GMP (cGMP) in rods and cones of photoreceptors. Plays an essential role in phototransduction, by mediating cGMP replenishment. May also participate in the trafficking of membrane-asociated proteins to the photoreceptor outer segment membrane. The polypeptide is Retinal guanylyl cyclase 1 (Gucy2e) (Rattus norvegicus (Rat)).